Reading from the N-terminus, the 58-residue chain is Small ribosomal subunit protein bS21 (58 aa).

The disordered stretch occupies residues Asp39–Arg58. Basic residues predominate over residues Val43–Arg58.

This sequence belongs to the bacterial ribosomal protein bS21 family.

The sequence is that of Small ribosomal subunit protein bS21 (rpsU) from Chlamydia pneumoniae (Chlamydophila pneumoniae).